The sequence spans 87 residues: uncharacterized protein (87 aa).

It to B.subtilis XkdR.

This is an uncharacterized protein from Bacillus subtilis (strain 168).